A 150-amino-acid polypeptide reads, in one-letter code: SsrA-binding protein (150 aa).

The protein belongs to the SmpB family.

The protein resides in the cytoplasm. Required for rescue of stalled ribosomes mediated by trans-translation. Binds to transfer-messenger RNA (tmRNA), required for stable association of tmRNA with ribosomes. tmRNA and SmpB together mimic tRNA shape, replacing the anticodon stem-loop with SmpB. tmRNA is encoded by the ssrA gene; the 2 termini fold to resemble tRNA(Ala) and it encodes a 'tag peptide', a short internal open reading frame. During trans-translation Ala-aminoacylated tmRNA acts like a tRNA, entering the A-site of stalled ribosomes, displacing the stalled mRNA. The ribosome then switches to translate the ORF on the tmRNA; the nascent peptide is terminated with the 'tag peptide' encoded by the tmRNA and targeted for degradation. The ribosome is freed to recommence translation, which seems to be the essential function of trans-translation. The protein is SsrA-binding protein of Campylobacter jejuni (strain RM1221).